The chain runs to 342 residues: Elongation factor Ts (342 aa).

Residues 79-82 (TDFV) form an involved in Mg(2+) ion dislocation from EF-Tu region.

The protein belongs to the EF-Ts family.

The protein localises to the cytoplasm. In terms of biological role, associates with the EF-Tu.GDP complex and induces the exchange of GDP to GTP. It remains bound to the aminoacyl-tRNA.EF-Tu.GTP complex up to the GTP hydrolysis stage on the ribosome. The polypeptide is Elongation factor Ts (Lactococcus lactis subsp. cremoris (strain MG1363)).